The primary structure comprises 91 residues: Large ribosomal subunit protein eL31 (91 aa).

It belongs to the eukaryotic ribosomal protein eL31 family.

The protein is Large ribosomal subunit protein eL31 of Pyrobaculum calidifontis (strain DSM 21063 / JCM 11548 / VA1).